The following is a 233-amino-acid chain: Ribosomal RNA-processing protein 14-C (233 aa).

Positions 32–65 (DRALLLQRRKEKAKARAEAKKLAKKESKAKQESK) form a coiled coil. The span at 47 to 64 (RAEAKKLAKKESKAKQES) shows a compositional bias: basic and acidic residues. Disordered stretches follow at residues 47 to 87 (RAEA…DNHK), 130 to 149 (KRRIESMDEEKRRKIEESDK), and 164 to 233 (DNEQ…SKKK). S75 is modified (phosphoserine). Residues 122 to 223 (ALKHLEAKKR…ESKKSKKGKA (102 aa)) adopt a coiled-coil conformation. 2 stretches are compositionally biased toward basic and acidic residues: residues 133–149 (IESMDEEKRRKIEESDK) and 180–209 (KKKSSDAWKERKDNEKKAMLMRQQRREENL). The segment covering 210-233 (KKRRESKKSKKGKAPKKKKPSKKK) has biased composition (basic residues).

Belongs to the SURF6 family. In terms of assembly, component of the 90S and 60S pre-ribosomal particles.

It is found in the nucleus. Its subcellular location is the nucleolus. Functionally, involved in ribosome biogenesis and cell polarity. Required for the synthesis of both 40S and 60S ribosomal subunits and may also play some direct role in correct positioning of the mitotic spindle during mitosis. This chain is Ribosomal RNA-processing protein 14-C (rrp14c), found in Schizosaccharomyces pombe (strain 972 / ATCC 24843) (Fission yeast).